Consider the following 295-residue polypeptide: Ribosomal protein L11 methyltransferase (295 aa).

Thr-146, Gly-167, Asp-189, and Asn-231 together coordinate S-adenosyl-L-methionine.

Belongs to the methyltransferase superfamily. PrmA family.

It is found in the cytoplasm. It carries out the reaction L-lysyl-[protein] + 3 S-adenosyl-L-methionine = N(6),N(6),N(6)-trimethyl-L-lysyl-[protein] + 3 S-adenosyl-L-homocysteine + 3 H(+). In terms of biological role, methylates ribosomal protein L11. This Vibrio cholerae serotype O1 (strain M66-2) protein is Ribosomal protein L11 methyltransferase.